The chain runs to 444 residues: UDP-N-acetylmuramate--L-alanine ligase (444 aa).

Glycine 110–serine 116 contributes to the ATP binding site.

Belongs to the MurCDEF family.

It localises to the cytoplasm. The catalysed reaction is UDP-N-acetyl-alpha-D-muramate + L-alanine + ATP = UDP-N-acetyl-alpha-D-muramoyl-L-alanine + ADP + phosphate + H(+). Its pathway is cell wall biogenesis; peptidoglycan biosynthesis. Functionally, cell wall formation. The sequence is that of UDP-N-acetylmuramate--L-alanine ligase from Streptococcus pneumoniae (strain CGSP14).